Consider the following 263-residue polypeptide: MARGPKKHLKRVAAPKHWMLDKLTGVFAPRPSTGPHKLRECLPLIVFLRNRLKYALTGDEVKKICMQHFLKIDGKVRVDITYPAGFIDVISIEKTGEHFRLVYNTKGCFAVHRITVEEAKYKLCKVRKITVGTKGIPHLVTHDARTIRYPDPLIKVNDTVQIDLGTGKITSFIKFDTGNVCMVIAGANLGRVGVITNRERHPGSCDVVHVKDANGNSFATRISNIFVIGNGNKPWISLPRGKGIRLTIAEERDKRLAAKQSSG.

An S4 RNA-binding domain is found at 42-104 (LPLIVFLRNR…TGEHFRLVYN (63 aa)).

The protein belongs to the eukaryotic ribosomal protein eS4 family.

In Homo sapiens (Human), this protein is Small ribosomal subunit protein eS4, Y isoform 2 (RPS4Y2).